The following is a 391-amino-acid chain: Phosphoglycerate kinase (391 aa).

Substrate-binding positions include 21-23, Arg36, 59-62, Arg113, and Arg146; these read DLN and HLGR. ATP is bound by residues Lys197, Glu319, and 345-348; that span reads GGDT.

This sequence belongs to the phosphoglycerate kinase family. As to quaternary structure, monomer.

It is found in the cytoplasm. The catalysed reaction is (2R)-3-phosphoglycerate + ATP = (2R)-3-phospho-glyceroyl phosphate + ADP. Its pathway is carbohydrate degradation; glycolysis; pyruvate from D-glyceraldehyde 3-phosphate: step 2/5. The polypeptide is Phosphoglycerate kinase (Shewanella baltica (strain OS195)).